The chain runs to 298 residues: N-acetylmuramic acid 6-phosphate etherase (298 aa).

The SIS domain maps to 55 to 218; sequence IHAQVSGGGR…STGLMIKSGK (164 aa). Glutamate 83 (proton donor) is an active-site residue. The active site involves glutamate 114.

It belongs to the GCKR-like family. MurNAc-6-P etherase subfamily. In terms of assembly, homodimer.

It carries out the reaction N-acetyl-D-muramate 6-phosphate + H2O = N-acetyl-D-glucosamine 6-phosphate + (R)-lactate. It participates in amino-sugar metabolism; 1,6-anhydro-N-acetylmuramate degradation. Its pathway is amino-sugar metabolism; N-acetylmuramate degradation. The protein operates within cell wall biogenesis; peptidoglycan recycling. Its function is as follows. Specifically catalyzes the cleavage of the D-lactyl ether substituent of MurNAc 6-phosphate, producing GlcNAc 6-phosphate and D-lactate. Together with AnmK, is also required for the utilization of anhydro-N-acetylmuramic acid (anhMurNAc) either imported from the medium or derived from its own cell wall murein, and thus plays a role in cell wall recycling. The protein is N-acetylmuramic acid 6-phosphate etherase of Shigella sonnei (strain Ss046).